Here is a 556-residue protein sequence, read N- to C-terminus: ATP synthase subunit beta-2, mitochondrial (556 aa).

The span at 1-20 shows a compositional bias: low complexity; the sequence is MASRRVLSSLLRSSSGRSAA. The disordered stretch occupies residues 1–37; the sequence is MASRRVLSSLLRSSSGRSAAKLVNRNPRLPSPSPARH. Residues 1 to 51 constitute a mitochondrion transit peptide; it reads MASRRVLSSLLRSSSGRSAAKLVNRNPRLPSPSPARHAAPCSYLLGRVAEY. S59 is subject to Phosphoserine. Residue 231–238 coordinates ATP; that stretch reads GGAGVGKT.

This sequence belongs to the ATPase alpha/beta chains family. In terms of assembly, F-type ATPases have 2 components, CF(1) - the catalytic core - and CF(0) - the membrane proton channel. CF(1) has five subunits: alpha(3), beta(3), gamma(1), delta(1), epsilon(1). CF(0) has three main subunits: a, b and c.

It localises to the mitochondrion. Its subcellular location is the mitochondrion inner membrane. It catalyses the reaction ATP + H2O + 4 H(+)(in) = ADP + phosphate + 5 H(+)(out). Mitochondrial membrane ATP synthase (F(1)F(0) ATP synthase or Complex V) produces ATP from ADP in the presence of a proton gradient across the membrane which is generated by electron transport complexes of the respiratory chain. F-type ATPases consist of two structural domains, F(1) - containing the extramembraneous catalytic core, and F(0) - containing the membrane proton channel, linked together by a central stalk and a peripheral stalk. During catalysis, ATP synthesis in the catalytic domain of F(1) is coupled via a rotary mechanism of the central stalk subunits to proton translocation. Subunits alpha and beta form the catalytic core in F(1). Rotation of the central stalk against the surrounding alpha(3)beta(3) subunits leads to hydrolysis of ATP in three separate catalytic sites on the beta subunits. In Arabidopsis thaliana (Mouse-ear cress), this protein is ATP synthase subunit beta-2, mitochondrial.